A 269-amino-acid polypeptide reads, in one-letter code: Tryptophan synthase alpha chain (269 aa).

Catalysis depends on proton acceptor residues E56 and D67.

This sequence belongs to the TrpA family. In terms of assembly, tetramer of two alpha and two beta chains.

It catalyses the reaction (1S,2R)-1-C-(indol-3-yl)glycerol 3-phosphate + L-serine = D-glyceraldehyde 3-phosphate + L-tryptophan + H2O. The protein operates within amino-acid biosynthesis; L-tryptophan biosynthesis; L-tryptophan from chorismate: step 5/5. The alpha subunit is responsible for the aldol cleavage of indoleglycerol phosphate to indole and glyceraldehyde 3-phosphate. The sequence is that of Tryptophan synthase alpha chain from Mycobacterium marinum (strain ATCC BAA-535 / M).